Here is a 739-residue protein sequence, read N- to C-terminus: Lysine decarboxylase (739 aa).

Lys-367 is modified (N6-(pyridoxal phosphate)lysine). The segment covering 714-726 (ADEPGDKPSDTVK) has biased composition (basic and acidic residues). The interval 714-739 (ADEPGDKPSDTVKKAPGKKPSAAKKS) is disordered. Positions 728–739 (APGKKPSAAKKS) are enriched in basic residues.

Belongs to the Orn/Lys/Arg decarboxylase class-I family. Pyridoxal 5'-phosphate is required as a cofactor.

Its subcellular location is the cytoplasm. The catalysed reaction is L-lysine + H(+) = cadaverine + CO2. This Hafnia alvei protein is Lysine decarboxylase.